The sequence spans 214 residues: Adenylate kinase (214 aa).

Glycine 10–threonine 15 contributes to the ATP binding site. Positions serine 30 to valine 59 are NMP. AMP contacts are provided by residues threonine 31, arginine 36, lysine 57 to valine 59, glycine 85 to arginine 88, and glutamine 92. Residues glycine 122–aspartate 159 form an LID region. ATP contacts are provided by residues arginine 123 and valine 132–tyrosine 133. AMP-binding residues include arginine 156 and arginine 167. Arginine 200 is a binding site for ATP.

The protein belongs to the adenylate kinase family. As to quaternary structure, monomer.

The protein localises to the cytoplasm. It carries out the reaction AMP + ATP = 2 ADP. It participates in purine metabolism; AMP biosynthesis via salvage pathway; AMP from ADP: step 1/1. Functionally, catalyzes the reversible transfer of the terminal phosphate group between ATP and AMP. Plays an important role in cellular energy homeostasis and in adenine nucleotide metabolism. The sequence is that of Adenylate kinase from Sodalis glossinidius (strain morsitans).